We begin with the raw amino-acid sequence, 523 residues long: 2-isopropylmalate synthase (523 aa).

The Pyruvate carboxyltransferase domain maps to 5–267 (VIIFDTTLRD…HTAINHQEIW (263 aa)). Positions 14, 202, 204, and 238 each coordinate Mn(2+). The tract at residues 392-523 (RLDYFSVQSG…QHNENNKETV (132 aa)) is regulatory domain.

This sequence belongs to the alpha-IPM synthase/homocitrate synthase family. LeuA type 1 subfamily. Homodimer. The cofactor is Mn(2+).

It is found in the cytoplasm. It carries out the reaction 3-methyl-2-oxobutanoate + acetyl-CoA + H2O = (2S)-2-isopropylmalate + CoA + H(+). Its pathway is amino-acid biosynthesis; L-leucine biosynthesis; L-leucine from 3-methyl-2-oxobutanoate: step 1/4. In terms of biological role, catalyzes the condensation of the acetyl group of acetyl-CoA with 3-methyl-2-oxobutanoate (2-ketoisovalerate) to form 3-carboxy-3-hydroxy-4-methylpentanoate (2-isopropylmalate). This is 2-isopropylmalate synthase from Escherichia coli (strain SMS-3-5 / SECEC).